Reading from the N-terminus, the 130-residue chain is Small ribosomal subunit protein uS8 (130 aa).

This sequence belongs to the universal ribosomal protein uS8 family. Part of the 30S ribosomal subunit.

In terms of biological role, one of the primary rRNA binding proteins, it binds directly to 16S rRNA central domain where it helps coordinate assembly of the platform of the 30S subunit. The sequence is that of Small ribosomal subunit protein uS8 from Korarchaeum cryptofilum (strain OPF8).